The following is a 473-amino-acid chain: Xylosidase/arabinosidase (473 aa).

The active-site Proton acceptor is the aspartate 18. Catalysis depends on glutamate 209, which acts as the Proton donor.

It belongs to the glycosyl hydrolase 43 family. In terms of assembly, homotetramer.

It carries out the reaction Hydrolysis of (1-&gt;4)-beta-D-xylans, to remove successive D-xylose residues from the non-reducing termini.. The enzyme catalyses Hydrolysis of terminal non-reducing alpha-L-arabinofuranoside residues in alpha-L-arabinosides.. The sequence is that of Xylosidase/arabinosidase (xylA) from Thermoclostridium stercorarium (Clostridium stercorarium).